A 386-amino-acid polypeptide reads, in one-letter code: Putative aminotransferase YugH (386 aa).

N6-(pyridoxal phosphate)lysine is present on lysine 234.

Belongs to the class-I pyridoxal-phosphate-dependent aminotransferase family. The cofactor is pyridoxal 5'-phosphate.

The protein localises to the cytoplasm. The polypeptide is Putative aminotransferase YugH (yugH) (Bacillus subtilis (strain 168)).